A 115-amino-acid chain; its full sequence is MDQYIRAIESQYIRKDFPEFRPGDTVRVYVKVREGNRERTQAFEGIVIKIRGGGVGKTFTVRRIGAGGIGVERIFPFASPAVEKVQVLRKGKVRRAKLYYVRNIRGKIRIKERRD.

Belongs to the bacterial ribosomal protein bL19 family.

Functionally, this protein is located at the 30S-50S ribosomal subunit interface and may play a role in the structure and function of the aminoacyl-tRNA binding site. This Kosmotoga olearia (strain ATCC BAA-1733 / DSM 21960 / TBF 19.5.1) protein is Large ribosomal subunit protein bL19.